The primary structure comprises 135 residues: Large ribosomal subunit protein uL16c (135 aa).

It belongs to the universal ribosomal protein uL16 family. In terms of assembly, part of the 50S ribosomal subunit.

The protein localises to the plastid. It is found in the chloroplast. This is Large ribosomal subunit protein uL16c from Piper cenocladum (Ant piper).